The sequence spans 1100 residues: QYDGVKAPDPGPGPMGMMGARGPPGPPGPPGAQGHTGHPGEPGEPGQTGPLGPRGPPGPPGKSGEDGNNGRPGKPGDRGAPGPQGARGFPGTPGLPGMKGHRGYTGLDGRKGEPGGAGAKGEPGAHGAAGSPGLAGSRGRAGPAGPAGARGADGNAGPAGPAGPLGAAGPPGFPGGPGPKGELGPAGATGPSGAQGSRGEPGPNGAVGPVGPPGNPGNNGLNGAKGAAGTPGVAGAPGFPGPRGGPGPQGPQGAAGQRGLAGDPGTQGVKGDGGPKGEPGNSGPQGPPGPQGEEGKRGPTGELGATGPAGNRGARPGSRGMPGSEGRTGPLGMPGARGASGAAGPRGPPGDAGRAGESGPAGLRGLPGSPGSSGPPGKEGAAGPAGQDGRGGPPGPTGPRGQPGNLGFPGPKGPSGEAGKPGDKGATGPTGLRGAPGPDGNNGATGATGPAGGPGEKGEQGASGAPGFQGLPGPAGGAGEAGKPGDRGLPGDQGVSGPAGAKGERGNPGAAGASGPQGPLGPRGPAGAPGTDGGKGEPGAAGAAGGPGHQGPGGMPGERGAAGPPGGKGEKGEGGHRGPDGNAGRDGSRGMPGPAGPPGPTGANGDKGESGAFGPAGPAGVRGASGERGEVGPAGAPGFAGPPGADGQTGARGERGPSGGKGESGPSGPAGPAGQSGPPGASGPAGPTGARGDNGPPGLTGFPGAAGRVGAAGPAGLVGPPGAAGPAGKDGPRGLRGDPGPSGPSGDQGMVGPPGPSGEKGXPGTPGTSGPLGLQGFVGLPGARGDRGSPGGAGAVGEAGRVGPAGPAGARGAPGNLGLPGMTGPQGEAGREGNPGNDGPPGRPGAPGFKGDRAGPTGAAGRPGNRGESGPGGAAGAVGPAGARGAAGPSGPRGEKGVAGEKGERGMKGLRGHAGLQGMPGPSGPSGDTGSAGPNGPAGPRGPAGPHGPPGKDGRAGGHGTLGSPGARLPGPPGPAGGGYDVSGYDEYRAAKDYEVDATIKSLNTQLENLLTPEGSRKNPARLSHPEWSSGFYVFCDFNTRETCLHAHPGSLARAEGNSRFTFSVLEDGCTRLPLLDLAPLDLGGADQEFGLDLGPVCFK.

The interval 1–982 (QYDGVKAPDP…PGPAGGGYDV (982 aa)) is disordered. Composition is skewed to low complexity over residues 122-170 (EPGA…AAGP), 200-209 (EPGPNGAVGP), and 216-237 (PGNN…AGAP). Over residues 239–249 (FPGPRGGPGPQ) the composition is skewed to pro residues. Residues 251–261 (PQGAAGQRGLA) show a composition bias toward low complexity. Gly residues predominate over residues 268-277 (GVKGDGGPKG). Composition is skewed to low complexity over residues 333-352 (MPGA…PGDA), 358-385 (SGPA…AGPA), 435-448 (APGP…TGAT), and 460-472 (QGAS…QGLP). Gly residues predominate over residues 473–482 (GPAGGAGEAG). Residues 507 to 517 (NPGAAGASGPQ) show a composition bias toward low complexity. The segment covering 530 to 557 (GTDGGKGEPGAAGAAGGPGHQGPGGMPG) has biased composition (gly residues). Basic and acidic residues predominate over residues 568–579 (KGEKGEGGHRGP). The span at 633-646 (PAGAPGFAGPPGAD) shows a compositional bias: low complexity. Positions 656-665 (GPSGGKGESG) are enriched in gly residues. 3 stretches are compositionally biased toward low complexity: residues 666–691 (PSGP…TGAR), 702–729 (FPGA…PAGK), and 757–775 (SGEK…LGLQ). Over residues 788-797 (GSPGGAGAVG) the composition is skewed to gly residues. Composition is skewed to low complexity over residues 798 to 820 (EAGR…LGLP) and 854 to 866 (AGPT…PGNR). Over residues 867–876 (GESGPGGAAG) the composition is skewed to gly residues. Over residues 877 to 892 (AVGPAGARGAAGPSGP) the composition is skewed to low complexity. Residues 893–907 (RGEKGVAGEKGERGM) show a composition bias toward basic and acidic residues. A compositionally biased stretch (low complexity) spans 916 to 935 (LQGMPGPSGPSGDTGSAGPN). Residues 1071–1100 (TRLPLLDLAPLDLGGADQEFGLDLGPVCFK) form the Fibrillar collagen NC1 domain.

The protein belongs to the fibrillar collagen family.

The protein resides in the secreted. It is found in the extracellular space. The protein localises to the extracellular matrix. This Epinephelus caninus (Dogtooth grouper) protein is Collagen alpha-2(I) chain.